We begin with the raw amino-acid sequence, 387 residues long: Protochlorophyllide reductase A, chloroplastic (387 aa).

The transit peptide at 1–35 directs the protein to the chloroplast; sequence MALQVQAALLPSALSVPKKGNLSAVVKEPGFLSVS.

This sequence belongs to the short-chain dehydrogenases/reductases (SDR) family. POR subfamily.

It is found in the plastid. The protein localises to the chloroplast. The catalysed reaction is chlorophyllide a + NADP(+) = protochlorophyllide a + NADPH + H(+). It functions in the pathway porphyrin-containing compound metabolism; chlorophyll biosynthesis. Its function is as follows. Phototransformation of protochlorophyllide (Pchlide) to chlorophyllide (Chlide). The chain is Protochlorophyllide reductase A, chloroplastic (PORA) from Oryza sativa subsp. japonica (Rice).